Here is a 434-residue protein sequence, read N- to C-terminus: 3-phosphoshikimate 1-carboxyvinyltransferase (434 aa).

3-phosphoshikimate is bound by residues Lys15, Ser16, and Arg20. Lys15 serves as a coordination point for phosphoenolpyruvate. Phosphoenolpyruvate-binding residues include Gly96 and Arg124. 3-phosphoshikimate contacts are provided by Ser169, Gln171, Ser195, Asp319, and Lys346. Gln171 provides a ligand contact to phosphoenolpyruvate. The active-site Proton acceptor is Asp319. Residues Arg350 and Arg394 each contribute to the phosphoenolpyruvate site.

Belongs to the EPSP synthase family. As to quaternary structure, monomer.

Its subcellular location is the cytoplasm. The catalysed reaction is 3-phosphoshikimate + phosphoenolpyruvate = 5-O-(1-carboxyvinyl)-3-phosphoshikimate + phosphate. Its pathway is metabolic intermediate biosynthesis; chorismate biosynthesis; chorismate from D-erythrose 4-phosphate and phosphoenolpyruvate: step 6/7. Catalyzes the transfer of the enolpyruvyl moiety of phosphoenolpyruvate (PEP) to the 5-hydroxyl of shikimate-3-phosphate (S3P) to produce enolpyruvyl shikimate-3-phosphate and inorganic phosphate. This chain is 3-phosphoshikimate 1-carboxyvinyltransferase, found in Chlorobaculum parvum (strain DSM 263 / NCIMB 8327) (Chlorobium vibrioforme subsp. thiosulfatophilum).